The following is a 936-amino-acid chain: DNA topoisomerase 1 (936 aa).

The Toprim domain occupies 15-139; that stretch reads RRLVIVESPT…VKRMVFHEIT (125 aa). Residues Glu-21 and Asp-108 each contribute to the Mg(2+) site. The 458-residue stretch at 154 to 611 folds into the Topo IA-type catalytic domain; sequence DIALVDAQET…FYFGGEHGVE (458 aa). Positions 188 to 193 are interaction with DNA; that stretch reads SAGRVQ. The O-(5'-phospho-DNA)-tyrosine intermediate role is filled by Tyr-339. Disordered regions lie at residues 661 to 688, 732 to 767, 841 to 884, and 903 to 936; these read LERM…LTPD, VLPE…SLFR, KRRG…ETNA, and LLAD…AKKA. A compositionally biased stretch (basic residues) spans 910–936; it reads RGPVKKKAPAKKAAKKAPAKKAAAKKA.

This sequence belongs to the type IA topoisomerase family. Monomer. Requires Mg(2+) as cofactor.

It carries out the reaction ATP-independent breakage of single-stranded DNA, followed by passage and rejoining.. In terms of biological role, releases the supercoiling and torsional tension of DNA, which is introduced during the DNA replication and transcription, by transiently cleaving and rejoining one strand of the DNA duplex. Introduces a single-strand break via transesterification at a target site in duplex DNA. The scissile phosphodiester is attacked by the catalytic tyrosine of the enzyme, resulting in the formation of a DNA-(5'-phosphotyrosyl)-enzyme intermediate and the expulsion of a 3'-OH DNA strand. The free DNA strand then undergoes passage around the unbroken strand, thus removing DNA supercoils. Finally, in the religation step, the DNA 3'-OH attacks the covalent intermediate to expel the active-site tyrosine and restore the DNA phosphodiester backbone. Relaxes negatively (but not positively) supercoiled DNA, concatanates and knots circular ssDNA at 52 but not 37 degrees Celsius. Preferentially nicks supercoiled DNA at C(G/T)CTT, cutting between the TT residues, binds ss and dsDNA with the recognition site. This is DNA topoisomerase 1 from Mycolicibacterium smegmatis (strain ATCC 700084 / mc(2)155) (Mycobacterium smegmatis).